Here is a 256-residue protein sequence, read N- to C-terminus: Putative bidirectional sugar transporter SWEET7e (256 aa).

The Extracellular segment spans residues 1-9 (MVSPDLIRN). The helical transmembrane segment at 10–30 (VVGIVGNAISFGLFLSPVLTF) threads the bilayer. The 88-residue stretch at 10–97 (VVGIVGNAIS…TIFFLFSNKK (88 aa)) folds into the MtN3/slv 1 domain. Residues 31–45 (WRIIKEKDMKYFKAD) are Cytoplasmic-facing. The helical transmembrane segment at 46–66 (PYLATLLNCMLWVFYGLPIVH) threads the bilayer. Topologically, residues 67–69 (PNS) are extracellular. The helical transmembrane segment at 70 to 90 (ILVVTINGIGLVIEAVYLTIF) threads the bilayer. At 91 to 100 (FLFSNKKNKK) the chain is on the cytoplasmic side. Residues 101–121 (MGVVLATEALFMAAVALGVLL) form a helical membrane-spanning segment. The Extracellular portion of the chain corresponds to 122-130 (GAHTHQRRS). The chain crosses the membrane as a helical span at residues 131–151 (LIVGILCVIFGTIMYSSPLTI). Residues 133–212 (VGILCVIFGT…LMQLILDKNQ (80 aa)) enclose the MtN3/slv 2 domain. The Cytoplasmic portion of the chain corresponds to 152 to 164 (MSQVVKTKSVEYM). The helical transmembrane segment at 165–185 (PLLLSVVSFLNGLCWTSYALI) threads the bilayer. Position 186 (R186) is a topological domain, extracellular. A helical transmembrane segment spans residues 187–207 (FDIFITIPNGLGVLFTLMQLI). Residues 208–256 (LDKNQDKNLELPTVAPVAKETSIVTPVSKDDDINGSTASHVIINITKEP) lie on the Cytoplasmic side of the membrane.

The protein belongs to the SWEET sugar transporter family. As to quaternary structure, forms homooligomers and/or heterooligomers.

It is found in the cell membrane. Mediates both low-affinity uptake and efflux of sugar across the plasma membrane. The protein is Putative bidirectional sugar transporter SWEET7e (SWEET7E) of Oryza sativa subsp. japonica (Rice).